Here is a 120-residue protein sequence, read N- to C-terminus: MDEPRPEAANVDSQQNSQCCLTRSEVYALVREVINKRKHHNLVTNVCDHVFDDGFEEQLKYIRANIDKALITVGGEHKHCKRLAAHIKKINKIFKLNKSLETEYKQSIDRYGSNRFNRNN.

This sequence belongs to the baculoviridae LEF-11 family.

Its function is as follows. Involved in late/very late gene activation. This Mamestra configurata nucleopolyhedrovirus (MacoNPV) protein is Late expression factor 11 (LEF-11).